Reading from the N-terminus, the 141-residue chain is Drosulfakinins (141 aa).

Positions 1-31 (MGLRRCTHFATLVMPLWALALFFLVVMQVPA) are cleaved as a signal peptide. The propeptide occupies 32-73 (QTTSLQISKEDRRLQELESKMGAESEQPNANLVGPSISRFGD). A disordered region spans residues 49–69 (ESKMGAESEQPNANLVGPSIS). Residue Phe-82 is modified to Phenylalanine amide. Residues 86–111 (VPLISRPMIPIELDLLMDNDDERTKA) constitute a propeptide that is removed on maturation. Tyr-117 carries the post-translational modification Sulfotyrosine. Phe-122 is modified (phenylalanine amide). Position 134 is a sulfotyrosine (Tyr-134). Phe-139 carries the post-translational modification Phenylalanine amide.

It belongs to the gastrin/cholecystokinin family.

It localises to the secreted. In terms of biological role, drosulfakinin-0 (DSK 0) plays diverse biological roles including regulating gut muscle contraction in adults but not in larvae. This Drosophila erecta (Fruit fly) protein is Drosulfakinins.